The sequence spans 197 residues: Putative manganese efflux pump MntP (197 aa).

Transmembrane regions (helical) follow at residues 8-28 (VILL…GLGA), 43-63 (VYAA…GYLL), 66-86 (VLLG…LIVL), 123-143 (LAIA…LLAL), 146-166 (WLAC…GIYL), and 177-197 (KAEI…MLFS).

It belongs to the MntP (TC 9.B.29) family.

It is found in the cell inner membrane. Probably functions as a manganese efflux pump. The sequence is that of Putative manganese efflux pump MntP from Psychrobacter arcticus (strain DSM 17307 / VKM B-2377 / 273-4).